A 378-amino-acid polypeptide reads, in one-letter code: Dihydroorotate dehydrogenase (quinone) (378 aa).

Residues 77–81 and threonine 101 contribute to the FMN site; that span reads AGFDK. A substrate-binding site is contributed by lysine 81. Substrate is bound at residue 126–130; that stretch reads NRMGF. Positions 158 and 191 each coordinate FMN. Residue asparagine 191 participates in substrate binding. Residue serine 194 is the Nucleophile of the active site. Asparagine 196 serves as a coordination point for substrate. 2 residues coordinate FMN: lysine 229 and threonine 257. A substrate-binding site is contributed by 258-259; that stretch reads NT. Residues glycine 287, glycine 316, and 337-338 each bind FMN; that span reads YT.

This sequence belongs to the dihydroorotate dehydrogenase family. Type 2 subfamily. Monomer. It depends on FMN as a cofactor.

Its subcellular location is the cell membrane. It catalyses the reaction (S)-dihydroorotate + a quinone = orotate + a quinol. Its pathway is pyrimidine metabolism; UMP biosynthesis via de novo pathway; orotate from (S)-dihydroorotate (quinone route): step 1/1. Catalyzes the conversion of dihydroorotate to orotate with quinone as electron acceptor. This is Dihydroorotate dehydrogenase (quinone) from Synechococcus sp. (strain ATCC 27144 / PCC 6301 / SAUG 1402/1) (Anacystis nidulans).